The chain runs to 137 residues: Acyl carrier protein 4, chloroplastic (137 aa).

The N-terminal 48 residues, 1 to 48 (MASLSTTSLSFKAPSTTISQVLRKASSSQSVTFGRFTSSTKSLRLQIS), are a transit peptide targeting the chloroplast. The region spanning 53–128 (AETVQKVSDI…EAADLIEDLV (76 aa)) is the Carrier domain. The residue at position 88 (serine 88) is an O-(pantetheine 4'-phosphoryl)serine.

This sequence belongs to the acyl carrier protein (ACP) family. In terms of processing, 4'-phosphopantetheine is transferred from CoA to a specific serine of apo-ACP by acpS. This modification is essential for activity because fatty acids are bound in thioester linkage to the sulfhydryl of the prosthetic group.

Its subcellular location is the plastid. It is found in the chloroplast. In terms of biological role, carrier of the growing fatty acid chain in fatty acid biosynthesis that plays a major role in the biosynthesis of fatty acids in leaves. Required for the biosynthesis of chloroplast photosynthetic membrane lipids such as monogalactosyldiacylglycerol, digalactosyldiacylglycerol and phosphatidylglycerol. Is essential for the biosynthesis of the cuticular wax and cutin polymers in leaves, and for the establishment of systemic acquired resistance (SAR). This Arabidopsis thaliana (Mouse-ear cress) protein is Acyl carrier protein 4, chloroplastic (ACP4).